A 615-amino-acid polypeptide reads, in one-letter code: Putative binding protein BRA0576/BS1330_II0571 (615 aa).

Residues 1-29 form the signal peptide; sequence MLNRFIAFFRSVFLIGLVATAFGALPARA.

The protein belongs to the bacterial solute-binding protein 5 family.

It localises to the periplasm. This is Putative binding protein BRA0576/BS1330_II0571 from Brucella suis biovar 1 (strain 1330).